The chain runs to 650 residues: Methionine--tRNA ligase (650 aa).

Positions 11-21 (YYVNDIPHIGH) match the 'HIGH' region motif. Positions 126, 129, 147, and 150 each coordinate Zn(2+). The short motif at 301–305 (KMSKS) is the 'KMSKS' region element. Position 304 (K304) interacts with ATP. Residues 513-535 (EKTEKAGEASPEKNEKEKKDAKE) form a disordered region. Positions 549–650 (DFKKVEIKVG…REKIAGSLIS (102 aa)) constitute a tRNA-binding domain.

It belongs to the class-I aminoacyl-tRNA synthetase family. MetG type 2A subfamily. Homodimer. The cofactor is Zn(2+).

The protein localises to the cytoplasm. The catalysed reaction is tRNA(Met) + L-methionine + ATP = L-methionyl-tRNA(Met) + AMP + diphosphate. Functionally, is required not only for elongation of protein synthesis but also for the initiation of all mRNA translation through initiator tRNA(fMet) aminoacylation. The polypeptide is Methionine--tRNA ligase (metG) (Helicobacter pylori (strain ATCC 700392 / 26695) (Campylobacter pylori)).